Consider the following 158-residue polypeptide: Urease subunit beta (158 aa).

The segment at 113–158 (EDDWRRSSAAGDAPQELPQVEAAERGRKLDEATDVGTEDTPEEGQN) is disordered. Residues 134–143 (AAERGRKLDE) are compositionally biased toward basic and acidic residues. Positions 144–158 (ATDVGTEDTPEEGQN) are enriched in acidic residues.

This sequence belongs to the urease beta subunit family. In terms of assembly, heterotrimer of UreA (gamma), UreB (beta) and UreC (alpha) subunits. Three heterotrimers associate to form the active enzyme.

It is found in the cytoplasm. The catalysed reaction is urea + 2 H2O + H(+) = hydrogencarbonate + 2 NH4(+). It functions in the pathway nitrogen metabolism; urea degradation; CO(2) and NH(3) from urea (urease route): step 1/1. The chain is Urease subunit beta from Corynebacterium glutamicum (strain R).